We begin with the raw amino-acid sequence, 385 residues long: MSTTTTMRAWTYMQSGLPSQTIVLDDEAPSPSAAELGPDELLIAVNYVAMNSGFTTLMRSLPPQPYSLPHIYNRQKRLGVPEFEFSGRILAVGSAIPSTRPDLQPSTLVLGCCAAKRVFIEGKGALAERVIAPAAQLIPLRPLSTVTTQDDESPGPDPAAPPISLLEASGLSACGCTAVQVLDLTKLVAGDKLFVNGGSTSVGMLIIQVARQVLGQTGTIIASGTDATLIRSVGADDVIDYTAQRPLHEFLRTHHAGRPFDAIIDCVGVAELYTHCEPYLAPGKLFINLGAMTAKPTFWGLLSFVWNQHMAPLWPVVLGGVPRSYQFYSARPNRETLGRVMRLVERGELRMVVDSVWEMRDAKMAYKRMESKRAKGKIIVRVQEE.

64 to 67 serves as a coordination point for NADP(+); that stretch reads QPYS. Residue 156–163 participates in substrate binding; that stretch reads PDPAAPPI. NADP(+)-binding positions include 199–202, 223–226, tyrosine 241, and 289–290; these read STSV, SGTD, and LG. 309 to 313 is a substrate binding site; the sequence is HMAPL. An NADP(+)-binding site is contributed by 372–373; the sequence is KR.

The protein belongs to the zinc-containing alcohol dehydrogenase family. As to quaternary structure, monomer.

It functions in the pathway secondary metabolite biosynthesis. Trans-enoyl reductase; part of the gene cluster that mediates the biosynthesis of oxaleimides, cytotoxic compounds containing an unusual disubstituted succinimide moiety. The first step of the pathway is provided by the HR-PKS poxF that serves in a new mode of collaborative biosynthesis with the PKS-NRPS poxE, by providing the olefin containing amino acid substrate via the synthesis of an ACP-bound dec-4-enoate. The cytochrome P450 monooxygenase poxM-catalyzed oxidation at the alpha-position creates the enzyme-bound 2-hydroxydec-4-enoyl-ACP thioester, which may be prone to spontaneous hydrolysis to yield 2-hydroxydec-4-enoic acid due to increased electrophilicity of the carbonyl. 2-hydroxydec-4-enoic acid can then be further oxidized by poxM to yield the alpha-ketoacid 2-oxodec-4-enoicacid, which is reductively aminated by the aminotransferase poxL to yield (S,E)-2-aminodec-4-enoic acid. The Hybrid PKS-NRPS synthetase poxE then performs condensation between the octaketide product of its PKS modules and the amino group of (S,E)-2-aminodec-4-enoic acid which is activated and incorporated by the adenylation domain. The resulting aminoacyl product can be cyclized by the Diels-Alderase PoxQ and reductively released by the reductive (R) domain of poxE to yield an aldehyde intermediate. The released aldehyde is then substrate for a Knoevenagel condensation by the hydrolyase poxO followed by an oxidation at the 5-position of the pyrrolidone ring. The presence of the olefin from the amino acid building block allows for migration of the substituted allyl group to occur. This allylic transposition reaction takes place in a conjugate addition, semipinacol-like fashion to yield a succinimide intermediate. Iterative two-electron oxidations of the C7 methyl of the succinimide intermediate to the carboxylic acid can be catalyzed by one of two remaining cytochrome P450 monooxygenasess poxC or poxD to yield oxaleimide A. Subsequent oxidation yields the maleimide scaffold oxaleimide I. Both oxaleimide A and oxaleimide I can undergo oxidative modifications in the decalin ring to yield the series of products oxaleimides B to H. The polypeptide is Trans-enoyl reductase poxH (Penicillium oxalicum (strain 114-2 / CGMCC 5302) (Penicillium decumbens)).